Here is a 71-residue protein sequence, read N- to C-terminus: Protein SlyX homolog (71 aa).

The protein belongs to the SlyX family.

This is Protein SlyX homolog from Rhodopseudomonas palustris (strain HaA2).